The following is a 386-amino-acid chain: Aspartate carbamoyltransferase 1, chloroplastic (386 aa).

A chloroplast-targeting transit peptide spans 1–39; that stretch reads MTVASMLSSNSMNVGVSNPKMSSKTSACCLLNRPWPSSC. Arg-132 and Thr-133 together coordinate carbamoyl phosphate. UMP contacts are provided by Arg-132 and Thr-133. Lys-162 contacts L-aspartate. Carbamoyl phosphate contacts are provided by Arg-183, His-211, and Gln-214. UMP contacts are provided by Arg-183 and His-211. Residues Arg-244 and Arg-306 each contribute to the UMP site. Residues Arg-244 and Arg-306 each contribute to the L-aspartate site. 2 residues coordinate carbamoyl phosphate: Leu-346 and Pro-347.

The protein belongs to the aspartate/ornithine carbamoyltransferase superfamily. ATCase family. As to quaternary structure, homotrimer.

The protein resides in the plastid. The protein localises to the chloroplast. The catalysed reaction is carbamoyl phosphate + L-aspartate = N-carbamoyl-L-aspartate + phosphate + H(+). Its pathway is pyrimidine metabolism; UMP biosynthesis via de novo pathway; (S)-dihydroorotate from bicarbonate: step 2/3. Feedback inhibited by UMP. Catalyzes the condensation of carbamoyl phosphate and aspartate to form carbamoyl aspartate and inorganic phosphate, the committed step in the de novo pyrimidine nucleotide biosynthesis pathway. In Pisum sativum (Garden pea), this protein is Aspartate carbamoyltransferase 1, chloroplastic (PYRB1).